Here is a 471-residue protein sequence, read N- to C-terminus: Tryptophanase (471 aa).

The residue at position 270 (K270) is an N6-(pyridoxal phosphate)lysine.

The protein belongs to the beta-eliminating lyase family. In terms of assembly, homotetramer. Pyridoxal 5'-phosphate serves as cofactor.

It catalyses the reaction L-tryptophan + H2O = indole + pyruvate + NH4(+). It participates in amino-acid degradation; L-tryptophan degradation via pyruvate pathway; indole and pyruvate from L-tryptophan: step 1/1. In Histophilus somni (strain 129Pt) (Haemophilus somnus), this protein is Tryptophanase.